A 67-amino-acid polypeptide reads, in one-letter code: Theromin (67 aa).

The region spanning 2-27 is the Antistasin-like domain; it reads CENTECPRACPGEYEFDEDGCNTCVC.

In terms of assembly, homodimer. Eight disulfide bonds are present.

The protein resides in the secreted. Functionally, potent thrombin-specific inhibitor. This chain is Theromin, found in Theromyzon tessulatum (Duck leech).